A 219-amino-acid chain; its full sequence is tRNA (guanine-N(7)-)-methyltransferase (219 aa).

S-adenosyl-L-methionine contacts are provided by glutamate 46, glutamate 71, asparagine 100, and aspartate 122. Aspartate 122 is a catalytic residue. Substrate is bound by residues lysine 126, aspartate 158, and 199–202 (TEYE).

Belongs to the class I-like SAM-binding methyltransferase superfamily. TrmB family.

It carries out the reaction guanosine(46) in tRNA + S-adenosyl-L-methionine = N(7)-methylguanosine(46) in tRNA + S-adenosyl-L-homocysteine. It participates in tRNA modification; N(7)-methylguanine-tRNA biosynthesis. In terms of biological role, catalyzes the formation of N(7)-methylguanine at position 46 (m7G46) in tRNA. In Leuconostoc citreum (strain KM20), this protein is tRNA (guanine-N(7)-)-methyltransferase.